Reading from the N-terminus, the 476-residue chain is Growth/differentiation factor 10 (476 aa).

An N-terminal signal peptide occupies residues 1 to 29 (MAPGLARISLRSQLLPLVPLLLLLRGAGC). The propeptide occupies 30-366 (GHRVPSWSSL…EKTMQKARRR (337 aa)). N-linked (GlcNAc...) asparagine glycans are attached at residues Asn-114, Asn-152, and Asn-277. 2 disordered regions span residues 268–305 (GDFE…LDER) and 330–358 (PRTG…FDEK). Cystine bridges form between Cys-374–Cys-441, Cys-403–Cys-473, and Cys-407–Cys-475. Asn-467 carries N-linked (GlcNAc...) asparagine glycosylation.

The protein belongs to the TGF-beta family. Homodimer or heterodimer. Can form a non-covalent complex of the mature region and the pro-region. Costa, costicartilage, femur, calvaria, trachea, aorta and brain. Predominantly in the cerebellum.

The protein localises to the secreted. Functionally, growth factor involved in osteogenesis and adipogenesis. Plays an inhibitory role in the process of osteoblast differentiation via SMAD2/3 pathway. Plays an inhibitory role in the process of adipogenesis. The sequence is that of Growth/differentiation factor 10 from Rattus norvegicus (Rat).